We begin with the raw amino-acid sequence, 333 residues long: Phenylalanine--tRNA ligase alpha subunit (333 aa).

Position 254 (Glu254) interacts with Mg(2+).

It belongs to the class-II aminoacyl-tRNA synthetase family. Phe-tRNA synthetase alpha subunit type 1 subfamily. As to quaternary structure, tetramer of two alpha and two beta subunits. The cofactor is Mg(2+).

It localises to the cytoplasm. The catalysed reaction is tRNA(Phe) + L-phenylalanine + ATP = L-phenylalanyl-tRNA(Phe) + AMP + diphosphate + H(+). The chain is Phenylalanine--tRNA ligase alpha subunit from Xylella fastidiosa (strain M12).